The sequence spans 158 residues: Regulator of sigma D (158 aa).

Belongs to the Rsd/AlgQ family. Interacts with RpoD.

The protein resides in the cytoplasm. Functionally, binds RpoD and negatively regulates RpoD-mediated transcription activation by preventing the interaction between the primary sigma factor RpoD with the catalytic core of the RNA polymerase and with promoter DNA. May be involved in replacement of the RNA polymerase sigma subunit from RpoD to RpoS during the transition from exponential growth to the stationary phase. This chain is Regulator of sigma D, found in Escherichia coli O6:H1 (strain CFT073 / ATCC 700928 / UPEC).